Consider the following 180-residue polypeptide: Adenine phosphoribosyltransferase (180 aa).

It belongs to the purine/pyrimidine phosphoribosyltransferase family. Homodimer.

Its subcellular location is the cytoplasm. It catalyses the reaction AMP + diphosphate = 5-phospho-alpha-D-ribose 1-diphosphate + adenine. It functions in the pathway purine metabolism; AMP biosynthesis via salvage pathway; AMP from adenine: step 1/1. Its function is as follows. Catalyzes a salvage reaction resulting in the formation of AMP, that is energically less costly than de novo synthesis. This chain is Adenine phosphoribosyltransferase, found in Rhizobium meliloti (strain 1021) (Ensifer meliloti).